The sequence spans 233 residues: Cytochrome c oxidase subunit 3 (233 aa).

The next 4 membrane-spanning stretches (helical) occupy residues V62–I82, L98–H118, W135–F155, and V172–L192.

The protein belongs to the cytochrome c oxidase subunit 3 family.

It localises to the cell membrane. It catalyses the reaction 4 Fe(II)-[cytochrome c] + O2 + 8 H(+)(in) = 4 Fe(III)-[cytochrome c] + 2 H2O + 4 H(+)(out). The polypeptide is Cytochrome c oxidase subunit 3 (ctaE) (Synechocystis sp. (strain ATCC 27184 / PCC 6803 / Kazusa)).